The primary structure comprises 783 residues: BMP/retinoic acid-inducible neural-specific protein 2 (783 aa).

A signal peptide spans 1–33 (MRWPCSSRFRGLWPEAAPWAVLLALGVPGWVLA). The MACPF domain maps to 85-281 (RYRIYREFAR…FVAAALSYIT (197 aa)). N-linked (GlcNAc...) asparagine glycans are attached at residues asparagine 185, asparagine 354, asparagine 473, asparagine 579, asparagine 626, and asparagine 658.

The protein belongs to the BRINP family. Expressed in olfactory bulb, cerebellum and neuronal layers in hippocampus.

The protein resides in the secreted. In terms of biological role, inhibits neuronal cell proliferation by negative regulation of the cell cycle transition. The sequence is that of BMP/retinoic acid-inducible neural-specific protein 2 (Brinp2) from Rattus norvegicus (Rat).